Reading from the N-terminus, the 61-residue chain is Metallothionein-1B (61 aa).

The beta stretch occupies residues 1–29; sequence MDPNCSCTTGGSCACAGSCKCKECKCTSC. A divalent metal cation-binding residues include Cys5, Cys7, Cys13, Cys15, Cys19, Cys21, Cys24, Cys26, Cys29, Cys33, Cys34, Cys36, Cys37, Cys41, Cys44, Cys48, Cys50, Cys57, Cys59, and Cys60. The tract at residues 30–61 is alpha; the sequence is KKCCCSCCPVGCAKCAQGCVCKGSSEKCRCCA.

It belongs to the metallothionein superfamily. Type 1 family. Monomer.

In terms of biological role, metallothioneins have a high content of cysteine residues that bind various heavy metals; these proteins are transcriptionally regulated by both heavy metals and glucocorticoids. This is Metallothionein-1B (MT1B) from Homo sapiens (Human).